A 389-amino-acid polypeptide reads, in one-letter code: 8-amino-7-oxononanoate synthase (389 aa).

Arginine 18 is a binding site for substrate. Glycine 104–tyrosine 105 is a pyridoxal 5'-phosphate binding site. Substrate is bound at residue histidine 129. Pyridoxal 5'-phosphate-binding residues include serine 176, histidine 204, and threonine 232. Residue lysine 235 is modified to N6-(pyridoxal phosphate)lysine. Position 351 (threonine 351) interacts with substrate.

The protein belongs to the class-II pyridoxal-phosphate-dependent aminotransferase family. BioF subfamily. As to quaternary structure, homodimer. Requires pyridoxal 5'-phosphate as cofactor.

The catalysed reaction is 6-carboxyhexanoyl-[ACP] + L-alanine + H(+) = (8S)-8-amino-7-oxononanoate + holo-[ACP] + CO2. It participates in cofactor biosynthesis; biotin biosynthesis. Catalyzes the decarboxylative condensation of pimeloyl-[acyl-carrier protein] and L-alanine to produce 8-amino-7-oxononanoate (AON), [acyl-carrier protein], and carbon dioxide. In Citrifermentans bemidjiense (strain ATCC BAA-1014 / DSM 16622 / JCM 12645 / Bem) (Geobacter bemidjiensis), this protein is 8-amino-7-oxononanoate synthase.